The sequence spans 214 residues: Refilin-B (214 aa).

Positions 1 to 56 (MVGRLSLQDVPELVDAKKKGDGVLDSPDSGLPPSPSPSHWGLAAGGGGGERAAAPG) are disordered. Residues S6 and S26 each carry the phosphoserine modification.

Belongs to the Refilin family. As to quaternary structure, interacts with FLNA and FLNB.

It localises to the cytoplasm. The protein resides in the cytoskeleton. Functionally, involved in the regulation of the perinuclear actin network and nuclear shape through interaction with filamins. Plays an essential role in the formation of cartilaginous skeletal elements. The protein is Refilin-B of Homo sapiens (Human).